The chain runs to 122 residues: Large ribosomal subunit protein uL14c (122 aa).

It belongs to the universal ribosomal protein uL14 family. In terms of assembly, part of the 50S ribosomal subunit.

The protein resides in the plastid. It is found in the chloroplast. In terms of biological role, binds to 23S rRNA. The sequence is that of Large ribosomal subunit protein uL14c from Marchantia polymorpha (Common liverwort).